The chain runs to 380 residues: Cytochrome b (380 aa).

4 helical membrane passes run 34–54, 78–99, 114–134, and 179–199; these read FGSLLGLCLVTQILTGLLLAT, WLIRNLHANGASFFFICIYLHI, WNTGILLLLTLMATAFVGYVL, and FFALHFLLPFMIAGLTLIHLT. Residues His84 and His98 each coordinate heme b. Residues His183 and His197 each contribute to the heme b site. His202 contributes to the a ubiquinone binding site. Transmembrane regions (helical) follow at residues 227-247, 289-309, 321-341, and 348-368; these read LKDTLGFMFMLFLLTTLALFS, LGGVLALAASVLILFLSPLLH, FSQFLFWLLIANLLILTWVGS, and FIIIGQLASLTYFTILLILLP.

Belongs to the cytochrome b family. As to quaternary structure, the cytochrome bc1 complex contains 11 subunits: 3 respiratory subunits (MT-CYB, CYC1 and UQCRFS1), 2 core proteins (UQCRC1 and UQCRC2) and 6 low-molecular weight proteins (UQCRH/QCR6, UQCRB/QCR7, UQCRQ/QCR8, UQCR10/QCR9, UQCR11/QCR10 and a cleavage product of UQCRFS1). This cytochrome bc1 complex then forms a dimer. It depends on heme b as a cofactor.

The protein localises to the mitochondrion inner membrane. Functionally, component of the ubiquinol-cytochrome c reductase complex (complex III or cytochrome b-c1 complex) that is part of the mitochondrial respiratory chain. The b-c1 complex mediates electron transfer from ubiquinol to cytochrome c. Contributes to the generation of a proton gradient across the mitochondrial membrane that is then used for ATP synthesis. This is Cytochrome b (MT-CYB) from Garrodia nereis (Grey-backed storm-petrel).